The following is a 309-amino-acid chain: Foldase protein PrsA (309 aa).

Positions 1–22 (MKTRSKLAAGFLTLMSVATLAA) are cleaved as a signal peptide. Cysteine 23 carries N-palmitoyl cysteine lipidation. Cysteine 23 carries the S-diacylglycerol cysteine lipid modification. The 96-residue stretch at 146–241 (TPETSVQVIK…TSYYIIKVTD (96 aa)) folds into the PpiC domain.

It belongs to the PrsA family.

It localises to the cell membrane. It catalyses the reaction [protein]-peptidylproline (omega=180) = [protein]-peptidylproline (omega=0). Functionally, plays a major role in protein secretion by helping the post-translocational extracellular folding of several secreted proteins. This chain is Foldase protein PrsA, found in Streptococcus agalactiae serotype III (strain NEM316).